A 600-amino-acid polypeptide reads, in one-letter code: NAD-dependent malic enzyme, mitochondrial (600 aa).

The transit peptide at 1 to 68 directs the protein to the mitochondrion; the sequence is MTRTPFTLSL…NMPIAAPVRT (68 aa). Arg-93 lines the fumarate pocket. Tyr-138 serves as the catalytic Proton donor. Arg-194 is a (S)-malate binding site. Position 194 (Arg-194) interacts with NAD(+). The active-site Proton acceptor is Lys-212. Positions 283, 284, and 307 each coordinate a divalent metal cation. Residues Gly-344 and Ala-347 each coordinate NAD(+). Residues Asn-458 and Asn-502 each coordinate (S)-malate.

This sequence belongs to the malic enzymes family. It depends on Mg(2+) as a cofactor. Mn(2+) serves as cofactor.

The protein resides in the mitochondrion matrix. The protein localises to the cytoplasm. It localises to the cytosol. It is found in the nucleus. The catalysed reaction is (S)-malate + NAD(+) = pyruvate + CO2 + NADH. The enzyme catalyses oxaloacetate + H(+) = pyruvate + CO2. NAD-dependent mitochondrial malic enzyme that catalyzes the oxidative decarboxylation of malate to pyruvate. The chain is NAD-dependent malic enzyme, mitochondrial from Cryptococcus neoformans var. grubii serotype A (strain H99 / ATCC 208821 / CBS 10515 / FGSC 9487) (Filobasidiella neoformans var. grubii).